Consider the following 416-residue polypeptide: Gamma-glutamyl phosphate reductase (416 aa).

The protein belongs to the gamma-glutamyl phosphate reductase family.

The protein resides in the cytoplasm. The enzyme catalyses L-glutamate 5-semialdehyde + phosphate + NADP(+) = L-glutamyl 5-phosphate + NADPH + H(+). It functions in the pathway amino-acid biosynthesis; L-proline biosynthesis; L-glutamate 5-semialdehyde from L-glutamate: step 2/2. Functionally, catalyzes the NADPH-dependent reduction of L-glutamate 5-phosphate into L-glutamate 5-semialdehyde and phosphate. The product spontaneously undergoes cyclization to form 1-pyrroline-5-carboxylate. This chain is Gamma-glutamyl phosphate reductase, found in Glaesserella parasuis serovar 5 (strain SH0165) (Haemophilus parasuis).